Here is a 214-residue protein sequence, read N- to C-terminus: Large ribosomal subunit protein uL6m (214 aa).

A mitochondrion-targeting transit peptide spans 1–16 (MSFIQRRLLSQTLFLR).

It belongs to the universal ribosomal protein uL6 family. As to quaternary structure, component of the mitochondrial large ribosomal subunit (mt-LSU). Mature yeast 74S mitochondrial ribosomes consist of a small (37S) and a large (54S) subunit. The 37S small subunit contains a 15S ribosomal RNA (15S mt-rRNA) and 34 different proteins. The 54S large subunit contains a 21S rRNA (21S mt-rRNA) and 46 different proteins.

The protein resides in the mitochondrion. Its function is as follows. Component of the mitochondrial ribosome (mitoribosome), a dedicated translation machinery responsible for the synthesis of mitochondrial genome-encoded proteins, including at least some of the essential transmembrane subunits of the mitochondrial respiratory chain. The mitoribosomes are attached to the mitochondrial inner membrane and translation products are cotranslationally integrated into the membrane. The sequence is that of Large ribosomal subunit protein uL6m (MRPL6) from Saccharomyces cerevisiae (strain ATCC 204508 / S288c) (Baker's yeast).